The chain runs to 100 residues: Urease subunit gamma (100 aa).

It belongs to the urease gamma subunit family. Heterotrimer of UreA (gamma), UreB (beta) and UreC (alpha) subunits. Three heterotrimers associate to form the active enzyme.

It localises to the cytoplasm. The catalysed reaction is urea + 2 H2O + H(+) = hydrogencarbonate + 2 NH4(+). It participates in nitrogen metabolism; urea degradation; CO(2) and NH(3) from urea (urease route): step 1/1. The sequence is that of Urease subunit gamma from Burkholderia thailandensis (strain ATCC 700388 / DSM 13276 / CCUG 48851 / CIP 106301 / E264).